Reading from the N-terminus, the 567-residue chain is Proline--tRNA ligase (567 aa).

The protein belongs to the class-II aminoacyl-tRNA synthetase family. ProS type 1 subfamily. As to quaternary structure, homodimer.

Its subcellular location is the cytoplasm. It catalyses the reaction tRNA(Pro) + L-proline + ATP = L-prolyl-tRNA(Pro) + AMP + diphosphate. Functionally, catalyzes the attachment of proline to tRNA(Pro) in a two-step reaction: proline is first activated by ATP to form Pro-AMP and then transferred to the acceptor end of tRNA(Pro). As ProRS can inadvertently accommodate and process non-cognate amino acids such as alanine and cysteine, to avoid such errors it has two additional distinct editing activities against alanine. One activity is designated as 'pretransfer' editing and involves the tRNA(Pro)-independent hydrolysis of activated Ala-AMP. The other activity is designated 'posttransfer' editing and involves deacylation of mischarged Ala-tRNA(Pro). The misacylated Cys-tRNA(Pro) is not edited by ProRS. In Staphylococcus aureus (strain COL), this protein is Proline--tRNA ligase.